A 213-amino-acid chain; its full sequence is Receptor-binding cancer antigen expressed on SiSo cells (213 aa).

The Extracellular segment spans residues 1 to 7 (MAITQFR). The chain crosses the membrane as a helical; Signal-anchor for type III membrane protein span at residues 8–27 (LFKVCTCLATVFSFLKRLIC). The Cytoplasmic portion of the chain corresponds to 28–213 (RSGRGRKLSG…EQNKIGVKLS (186 aa)). Ser-36 carries the post-translational modification Phosphoserine. Residue Thr-41 is modified to Phosphothreonine. A Phosphotyrosine modification is found at Tyr-94. Positions 163-211 (EDAAWQAEEVLRQQKIADREKRAAEQQRKKMEKEAQRLMKKEQNKIGVK) form a coiled coil. Over residues 179–206 (ADREKRAAEQQRKKMEKEAQRLMKKEQN) the composition is skewed to basic and acidic residues. The interval 179–213 (ADREKRAAEQQRKKMEKEAQRLMKKEQNKIGVKLS) is disordered.

Homodimer. Widely expressed. Expressed in heart, brain, spleen, liver, kidney and testis.

The protein resides in the golgi apparatus membrane. May participate in suppression of cell proliferation and induces apoptotic cell death through activation of interleukin-1-beta converting enzyme (ICE)-like proteases. This is Receptor-binding cancer antigen expressed on SiSo cells (Ebag9) from Mus musculus (Mouse).